The primary structure comprises 455 residues: uncharacterized protein (455 aa).

A compositionally biased stretch (low complexity) spans 1 to 20; the sequence is MGCCLSKKPSPSLPSSVKPS. Disordered regions lie at residues 1 to 234 and 258 to 304; these read MGCC…IPAT and RIAA…QNTK. 5 stretches are compositionally biased toward basic and acidic residues: residues 35-46, 61-75, 129-143, 156-166, and 173-186; these read EEAKPKSEKLNQ, SHEE…DKDS, RSFD…RGGD, RGVERVHGSPR, and PSRE…RERG. Residues 213-224 are compositionally biased toward polar residues; it reads SCGSSVNSSNNR. Residues 260 to 271 show a composition bias toward low complexity; sequence AASPRSKSPARA.

This is an uncharacterized protein from Arabidopsis thaliana (Mouse-ear cress).